We begin with the raw amino-acid sequence, 269 residues long: MTHLERSRHQQYPYHMVLPSPWPMLLSFALLSLTLSLGLTMHGYIGNMNLVYLALLVVTLTSVFWFRDVIAEATYLGDHTIAVRKGINLGFLLFVLSEVLIFAGLFWAYFHSAMSPDIVLGASWPPVGIQAVQPTELPLLNTIILLSSGATITYSHHALICRNRNKALSGLFITIWLIIIFVTCQYIEYTNAAFTISDGVYGSVFYAGTGLHFLHMVMLAVMLIICYWRMRTYQFTSTHHVGFETTILYCHVLDIIWLFLYIVFYWWGV.

7 helical membrane passes run 21–41 (PWPM…GLTM), 45–65 (IGNM…SVFW), 90–110 (GFLL…WAYF), 138–160 (PLLN…HALI), 167–187 (ALSG…CQYI), 205–225 (FYAG…MLII), and 247–267 (ILYC…FYWW).

Belongs to the cytochrome c oxidase subunit 3 family. As to quaternary structure, component of the cytochrome c oxidase (complex IV, CIV), a multisubunit enzyme composed of a catalytic core of 3 subunits and several supernumerary subunits. The complex exists as a monomer or a dimer and forms supercomplexes (SCs) in the inner mitochondrial membrane with ubiquinol-cytochrome c oxidoreductase (cytochrome b-c1 complex, complex III, CIII).

Its subcellular location is the mitochondrion inner membrane. The catalysed reaction is 4 Fe(II)-[cytochrome c] + O2 + 8 H(+)(in) = 4 Fe(III)-[cytochrome c] + 2 H2O + 4 H(+)(out). Functionally, component of the cytochrome c oxidase, the last enzyme in the mitochondrial electron transport chain which drives oxidative phosphorylation. The respiratory chain contains 3 multisubunit complexes succinate dehydrogenase (complex II, CII), ubiquinol-cytochrome c oxidoreductase (cytochrome b-c1 complex, complex III, CIII) and cytochrome c oxidase (complex IV, CIV), that cooperate to transfer electrons derived from NADH and succinate to molecular oxygen, creating an electrochemical gradient over the inner membrane that drives transmembrane transport and the ATP synthase. Cytochrome c oxidase is the component of the respiratory chain that catalyzes the reduction of oxygen to water. Electrons originating from reduced cytochrome c in the intermembrane space (IMS) are transferred via the dinuclear copper A center (CU(A)) of subunit 2 and heme A of subunit 1 to the active site in subunit 1, a binuclear center (BNC) formed by heme A3 and copper B (CU(B)). The BNC reduces molecular oxygen to 2 water molecules using 4 electrons from cytochrome c in the IMS and 4 protons from the mitochondrial matrix. The sequence is that of Cytochrome c oxidase subunit 3 (COX3) from Candida glabrata (strain ATCC 2001 / BCRC 20586 / JCM 3761 / NBRC 0622 / NRRL Y-65 / CBS 138) (Yeast).